The primary structure comprises 91 residues: Small ribosomal subunit protein bS18 (91 aa).

Belongs to the bacterial ribosomal protein bS18 family. As to quaternary structure, part of the 30S ribosomal subunit. Forms a tight heterodimer with protein bS6.

Binds as a heterodimer with protein bS6 to the central domain of the 16S rRNA, where it helps stabilize the platform of the 30S subunit. The polypeptide is Small ribosomal subunit protein bS18 (Burkholderia vietnamiensis (strain G4 / LMG 22486) (Burkholderia cepacia (strain R1808))).